Reading from the N-terminus, the 220-residue chain is MNVQIEESWKTHLEPEFEKDYFRTLTEFVRSEYSQYQIFPPGKLIFNAFNLCPFDKVKVVIIGQDPYHGPGQAHGLCFSVNDGVAFPPSLVNIFKEIKEDIGTPAPSTGNLTRWAEQGVLLLNATLTVRAHQAGSHQRRGWEEFTDAAIRVLAEERENLVFILWGSYAQKKGAFIDRNKHLVLSSAHPSPLSAYNGFFGNKHFSKTNEYLKAHGKTEINW.

Asp65 serves as the catalytic Proton acceptor.

The protein belongs to the uracil-DNA glycosylase (UDG) superfamily. UNG family.

The protein resides in the cytoplasm. It catalyses the reaction Hydrolyzes single-stranded DNA or mismatched double-stranded DNA and polynucleotides, releasing free uracil.. Excises uracil residues from the DNA which can arise as a result of misincorporation of dUMP residues by DNA polymerase or due to deamination of cytosine. The polypeptide is Uracil-DNA glycosylase 2 (Bacteroides fragilis (strain ATCC 25285 / DSM 2151 / CCUG 4856 / JCM 11019 / LMG 10263 / NCTC 9343 / Onslow / VPI 2553 / EN-2)).